A 564-amino-acid chain; its full sequence is Phosphoinositide phospholipase C 3 (564 aa).

Residues 19-54 (TRQPPVSIKRLFEAYSRNGKMSFDELLRFVSEVQGE) form the EF-hand domain. The PI-PLC X-box domain maps to 106–250 (HDMKAPLSHY…LKGKILISTK (145 aa)). Residues His-121 and His-167 contribute to the active site. The region spanning 296 to 412 (RDLIAIHAAN…GYVKKPRILL (117 aa)) is the PI-PLC Y-box domain. The 134-residue stretch at 406 to 539 (KKPRILLDEH…KSGVRAVRLH (134 aa)) folds into the C2 domain. Residues Asp-450, Asp-456, Asp-509, Asp-511, and Asp-517 each coordinate Ca(2+).

Ca(2+) is required as a cofactor. In terms of tissue distribution, expressed in leaves, roots and siliques, but not in flowers.

It is found in the cell membrane. It carries out the reaction a 1,2-diacyl-sn-glycero-3-phospho-(1D-myo-inositol-4,5-bisphosphate) + H2O = 1D-myo-inositol 1,4,5-trisphosphate + a 1,2-diacyl-sn-glycerol + H(+). Its function is as follows. The production of the second messenger molecules diacylglycerol (DAG) and inositol 1,4,5-trisphosphate (IP3) is mediated by activated phosphatidylinositol-specific phospholipase C enzymes. This is Phosphoinositide phospholipase C 3 (PLC3) from Arabidopsis thaliana (Mouse-ear cress).